The following is a 259-amino-acid chain: Deoxyribose-phosphate aldolase (259 aa).

Residue Asp102 is the Proton donor/acceptor of the active site. The active-site Schiff-base intermediate with acetaldehyde is Lys167. Lys201 functions as the Proton donor/acceptor in the catalytic mechanism.

Belongs to the DeoC/FbaB aldolase family. DeoC type 2 subfamily.

The protein localises to the cytoplasm. It catalyses the reaction 2-deoxy-D-ribose 5-phosphate = D-glyceraldehyde 3-phosphate + acetaldehyde. It participates in carbohydrate degradation; 2-deoxy-D-ribose 1-phosphate degradation; D-glyceraldehyde 3-phosphate and acetaldehyde from 2-deoxy-alpha-D-ribose 1-phosphate: step 2/2. Its function is as follows. Catalyzes a reversible aldol reaction between acetaldehyde and D-glyceraldehyde 3-phosphate to generate 2-deoxy-D-ribose 5-phosphate. This chain is Deoxyribose-phosphate aldolase, found in Enterobacter sp. (strain 638).